A 525-amino-acid chain; its full sequence is Glutamyl-tRNA(Gln) amidotransferase subunit A, mitochondrial (525 aa).

Active-site charge relay system residues include K76 and S168. Catalysis depends on S192, which acts as the Acyl-ester intermediate.

The protein belongs to the amidase family. GatA subfamily. In terms of assembly, subunit of the heterotrimeric GatCAB amidotransferase (AdT) complex, composed of A (QRSL1), B (GATB) and C (GATC) subunits.

It localises to the mitochondrion. It catalyses the reaction L-glutamyl-tRNA(Gln) + L-glutamine + ATP + H2O = L-glutaminyl-tRNA(Gln) + L-glutamate + ADP + phosphate + H(+). Functionally, allows the formation of correctly charged Gln-tRNA(Gln) through the transamidation of misacylated Glu-tRNA(Gln) in the mitochondria. The reaction takes place in the presence of glutamine and ATP through an activated gamma-phospho-Glu-tRNA(Gln). The sequence is that of Glutamyl-tRNA(Gln) amidotransferase subunit A, mitochondrial (Qrsl1) from Mus musculus (Mouse).